A 156-amino-acid polypeptide reads, in one-letter code: Cell division protein SepF (156 aa).

A compositionally biased stretch (basic and acidic residues) spans 23–36 (SYEKEQTDMKKQQD). A disordered region spans residues 23-50 (SYEKEQTDMKKQQDPPEQQDVTFPKAQP).

The protein belongs to the SepF family. In terms of assembly, homodimer. Interacts with FtsZ.

The protein localises to the cytoplasm. Cell division protein that is part of the divisome complex and is recruited early to the Z-ring. Probably stimulates Z-ring formation, perhaps through the cross-linking of FtsZ protofilaments. Its function overlaps with FtsA. The polypeptide is Cell division protein SepF (Bacillus thuringiensis (strain Al Hakam)).